Reading from the N-terminus, the 276-residue chain is MADKALKVGIVGYGHLGQFLVEKIQSEGAEVGLQLAFVWNRNADKLKDSLPKDLILHDLSDFTQRDTDVIVEVCHPLIVKEFGVRFLSHAHFLVGSPSALSDGQLEQDLRTAAKQQGKTLYVPSGALWGGQDIQKMNDSGTLRALSIRMSKHPSCFRLTGGLLSDWTEGEGRRVLYRGSVAELCPLAPNNVNTMAAAAIAASKLGFHGVTGEIVSDTALADYHVVEVDVTGPDGFSVKTMRQNPAKLGAVTGKATYNSFWSSLLVCKGHGGRVYLC.

The protein belongs to the L-aspartate dehydrogenase family.

This chain is Aspartate dehydrogenase domain-containing protein (aspdh), found in Danio rerio (Zebrafish).